The primary structure comprises 35 residues: U1-theraphotoxin-Hhn1a (35 aa).

Cystine bridges form between cysteine 2-cysteine 16, cysteine 9-cysteine 21, and cysteine 15-cysteine 28.

Belongs to the neurotoxin 10 (Hwtx-1) family. 24 (Hwtx-6) subfamily. In terms of tissue distribution, expressed by the venom gland.

The protein resides in the secreted. In terms of biological role, gating-modifier toxin that dose-dependently inhibits inactivation of voltage-gated sodium channels and reduces the peak of sodium current in cockroach DUM neurons. In vivo, reversibly paralyzes cockroaches for several hours, paralyzes rat after intracerebroventricular injection and blocks the neuromuscular transmission of the isolated rat phrenic nerve-diaphragm preparation. In Cyriopagopus hainanus (Chinese bird spider), this protein is U1-theraphotoxin-Hhn1a.